We begin with the raw amino-acid sequence, 144 residues long: Large ribosomal subunit protein uL11 (144 aa).

The protein belongs to the universal ribosomal protein uL11 family. Part of the ribosomal stalk of the 50S ribosomal subunit. Interacts with L10 and the large rRNA to form the base of the stalk. L10 forms an elongated spine to which L12 dimers bind in a sequential fashion forming a multimeric L10(L12)X complex. Post-translationally, one or more lysine residues are methylated.

In terms of biological role, forms part of the ribosomal stalk which helps the ribosome interact with GTP-bound translation factors. The protein is Large ribosomal subunit protein uL11 of Francisella tularensis subsp. holarctica (strain OSU18).